The following is a 673-amino-acid chain: Pesticin receptor (673 aa).

Positions 1 to 22 are cleaved as a signal peptide; it reads MKMTRLYPLALGGLLLPAIANA. Residues 30-37 carry the TonB box motif; sequence STLEVTAS. A TBDR plug domain is found at 41 to 155; sequence SRSASANNVS…QGGIINIVTQ (115 aa). Residues 160-672 form the TBDR beta-barrel domain; the sequence is TPRGYIEGGV…TVGINTRIDF (513 aa). Positions 657–673 match the TonB C-terminal box motif; sequence QVNMGRTVGINTRIDFF.

This sequence belongs to the TonB-dependent receptor family.

Its subcellular location is the cell outer membrane. Its function is as follows. Receptor for the bacteriocin pesticin and for the siderophore yersiniabactin. The protein is Pesticin receptor (fyuA) of Yersinia enterocolitica serotype O:8 / biotype 1B (strain NCTC 13174 / 8081).